The following is a 238-amino-acid chain: Endonuclease V (238 aa).

Asp46 and Asp116 together coordinate Mg(2+).

This sequence belongs to the endonuclease V family. Mg(2+) serves as cofactor.

Its subcellular location is the cytoplasm. The catalysed reaction is Endonucleolytic cleavage at apurinic or apyrimidinic sites to products with a 5'-phosphate.. Functionally, DNA repair enzyme involved in the repair of deaminated bases. Selectively cleaves double-stranded DNA at the second phosphodiester bond 3' to a deoxyinosine leaving behind the intact lesion on the nicked DNA. The polypeptide is Endonuclease V (Bacillus velezensis (strain DSM 23117 / BGSC 10A6 / LMG 26770 / FZB42) (Bacillus amyloliquefaciens subsp. plantarum)).